The primary structure comprises 234 residues: AA9 family lytic polysaccharide monooxygenase D (234 aa).

The first 18 residues, 1 to 18 (MRIEKLLNAALLAGAVSA), serve as a signal peptide directing secretion. Positions 19 and 95 each coordinate Cu(2+). A disulfide bridge connects residues cysteine 57 and cysteine 182. O2 contacts are provided by histidine 168 and glutamine 177. Tyrosine 179 contributes to the Cu(2+) binding site.

Belongs to the polysaccharide monooxygenase AA9 family. It depends on Cu(2+) as a cofactor.

It localises to the secreted. The catalysed reaction is [(1-&gt;4)-beta-D-glucosyl]n+m + reduced acceptor + O2 = 4-dehydro-beta-D-glucosyl-[(1-&gt;4)-beta-D-glucosyl]n-1 + [(1-&gt;4)-beta-D-glucosyl]m + acceptor + H2O.. Functionally, lytic polysaccharide monooxygenase (LPMO) that depolymerizes crystalline and amorphous polysaccharides via the oxidation of scissile alpha- or beta-(1-4)-glycosidic bonds, yielding C1 or C4 oxidation products. Catalysis by LPMOs requires the reduction of the active-site copper from Cu(II) to Cu(I) by a reducing agent and H(2)O(2) or O(2) as a cosubstrate. The polypeptide is AA9 family lytic polysaccharide monooxygenase D (Malbranchea cinnamomea (Thermophilic fungus)).